The chain runs to 258 residues: Shikimate dehydrogenase (NADP(+)) (258 aa).

Residues 14 to 16 (SES) and Thr-61 each bind shikimate. The active-site Proton acceptor is Lys-65. Positions 86 and 101 each coordinate shikimate. Residues 125–129 (GSGGS) and Leu-211 each bind NADP(+). Tyr-213 provides a ligand contact to shikimate. Gly-234 is a binding site for NADP(+).

It belongs to the shikimate dehydrogenase family. In terms of assembly, homodimer.

The catalysed reaction is shikimate + NADP(+) = 3-dehydroshikimate + NADPH + H(+). Its pathway is metabolic intermediate biosynthesis; chorismate biosynthesis; chorismate from D-erythrose 4-phosphate and phosphoenolpyruvate: step 4/7. In terms of biological role, involved in the biosynthesis of the chorismate, which leads to the biosynthesis of aromatic amino acids. Catalyzes the reversible NADPH linked reduction of 3-dehydroshikimate (DHSA) to yield shikimate (SA). The sequence is that of Shikimate dehydrogenase (NADP(+)) from Clostridium botulinum (strain Loch Maree / Type A3).